The sequence spans 248 residues: Adenosylcobinamide-GDP ribazoletransferase (248 aa).

7 helical membrane passes run 24–44 (EINLKKGSALLPFVGVIIGAW), 70–90 (IIITGGFHVDALADTADGLFS), 106–126 (VGANGVIAICFYFLFYGSLFL), 134–154 (IGWLFFVLPIVAKGVTMLLFA), 168–188 (IFLGVPWWPVVIAQVIVLVAL), 189–209 (GAFFSYIGVIAYAGVILFTII), and 228–248 (AGGQMGQLICLFCLVLLWGLI).

This sequence belongs to the CobS family. Requires Mg(2+) as cofactor.

It localises to the cell membrane. The catalysed reaction is alpha-ribazole + adenosylcob(III)inamide-GDP = adenosylcob(III)alamin + GMP + H(+). The enzyme catalyses alpha-ribazole 5'-phosphate + adenosylcob(III)inamide-GDP = adenosylcob(III)alamin 5'-phosphate + GMP + H(+). It functions in the pathway cofactor biosynthesis; adenosylcobalamin biosynthesis; adenosylcobalamin from cob(II)yrinate a,c-diamide: step 7/7. In terms of biological role, joins adenosylcobinamide-GDP and alpha-ribazole to generate adenosylcobalamin (Ado-cobalamin). Also synthesizes adenosylcobalamin 5'-phosphate from adenosylcobinamide-GDP and alpha-ribazole 5'-phosphate. The chain is Adenosylcobinamide-GDP ribazoletransferase from Listeria monocytogenes serotype 4b (strain F2365).